The primary structure comprises 482 residues: 2-succinylbenzoate--CoA ligase (482 aa).

The protein belongs to the ATP-dependent AMP-binding enzyme family. MenE subfamily.

It carries out the reaction 2-succinylbenzoate + ATP + CoA = 2-succinylbenzoyl-CoA + AMP + diphosphate. It participates in quinol/quinone metabolism; 1,4-dihydroxy-2-naphthoate biosynthesis; 1,4-dihydroxy-2-naphthoate from chorismate: step 5/7. The protein operates within quinol/quinone metabolism; menaquinone biosynthesis. Converts 2-succinylbenzoate (OSB) to 2-succinylbenzoyl-CoA (OSB-CoA). The chain is 2-succinylbenzoate--CoA ligase from Bacillus cereus (strain AH820).